A 250-amino-acid chain; its full sequence is Ribosomal RNA small subunit methyltransferase J (250 aa).

S-adenosyl-L-methionine-binding positions include 96 to 97 (RD) and Asp168.

It belongs to the methyltransferase superfamily. RsmJ family.

It is found in the cytoplasm. It catalyses the reaction guanosine(1516) in 16S rRNA + S-adenosyl-L-methionine = N(2)-methylguanosine(1516) in 16S rRNA + S-adenosyl-L-homocysteine + H(+). Functionally, specifically methylates the guanosine in position 1516 of 16S rRNA. The sequence is that of Ribosomal RNA small subunit methyltransferase J from Neisseria meningitidis serogroup B (strain ATCC BAA-335 / MC58).